Consider the following 108-residue polypeptide: Putative bolA-like protein K11H12.1 (108 aa).

Positions 89–108 are disordered; the sequence is SKWDGQKQEDSPTCRGGFGK.

The protein belongs to the BolA/IbaG family.

The polypeptide is Putative bolA-like protein K11H12.1 (Caenorhabditis elegans).